Consider the following 1231-residue polypeptide: Chromosome-associated kinesin KIF4 (1231 aa).

The Kinesin motor domain maps to 9 to 337 (PVRVALRCRP…LRYADRARKI (329 aa)). 88–95 (GQTGSGKT) contributes to the ATP binding site. Residues 351–1000 (ELNHLKQQVQ…IKQKLTLLQV (650 aa)) adopt a coiled-coil conformation. Ser-395 is subject to Phosphoserine. Thr-800 carries the post-translational modification Phosphothreonine. A phosphoserine mark is found at Ser-802, Ser-811, and Ser-816. A globular region spans residues 1001–1231 (ASKQKPHLTR…GCSPIQEESH (231 aa)). The disordered stretch occupies residues 1189-1212 (HPELKSIASESQENKAIGKKKKRA). Residues Ser-1224 and Ser-1230 each carry the phosphoserine modification.

The protein belongs to the TRAFAC class myosin-kinesin ATPase superfamily. Kinesin family. Chromokinesin subfamily. [2Fe-2S] cluster serves as cofactor. [4Fe-4S] cluster is required as a cofactor. As to expression, expressed in pyramidal cells in juvenile hippocampus, granular cells in juvenile cerebellar cortex and in adult spleen.

It is found in the nucleus. The protein resides in the chromosome. It localises to the cytoplasm. Its subcellular location is the cytoskeleton. Functionally, iron-sulfur (Fe-S) cluster binding motor protein that has a role in chromosome segregation during mitosis. Required for mitotic chromosomal positioning and bipolar spindle stabilization. The polypeptide is Chromosome-associated kinesin KIF4 (Kif4) (Mus musculus (Mouse)).